The sequence spans 237 residues: GCN5-related N-acetyltransferase 3, chloroplastic (237 aa).

A chloroplast-targeting transit peptide spans 1 to 93; that stretch reads MGLVGCVGKS…RAISRSDVIV (93 aa). In terms of domain architecture, N-acetyltransferase spans 94-237; the sequence is SVFCKPQHVD…TMMFTKSLEA (144 aa). Residues 171–173, 179–184, 207–209, and F214 contribute to the acetyl-CoA site; these read LMV, RMGIGK, and FED.

The protein belongs to the acetyltransferase family. GNAT subfamily. In terms of assembly, oligomer. In terms of processing, autoacetylated. Expressed in green tissues.

The protein localises to the plastid. It is found in the chloroplast. The catalysed reaction is an N-terminal L-alpha-aminoacyl-[protein] + acetyl-CoA = N-terminal N(alpha)-acetyl-L-alpha-aminoacyl-[protein] + CoA + H(+). It catalyses the reaction L-lysyl-[protein] + acetyl-CoA = N(6)-acetyl-L-lysyl-[protein] + CoA + H(+). Protein acetyltransferase with dual specificity triggering both N-alpha-acetylation (NTA) and epsilon-lysine acetylation (KA), possibly with a low efficiency or toward specific plastid substrates. The chain is GCN5-related N-acetyltransferase 3, chloroplastic from Arabidopsis thaliana (Mouse-ear cress).